Reading from the N-terminus, the 720-residue chain is Biotin biosynthesis bifunctional protein BioWF (720 aa).

A disordered region spans residues 1 to 39; it reads MRFSIKMRASARVSSSPSTSDGSSGDHTESRDRADRHIS. Over residues 8-23 the composition is skewed to low complexity; sequence RASARVSSSPSTSDGS. Basic and acidic residues predominate over residues 24-39; sequence SGDHTESRDRADRHIS. R314 is a binding site for substrate. 401-402 lines the pyridoxal 5'-phosphate pocket; it reads GY. H439 provides a ligand contact to substrate. Residues S488, 513–516, and 564–567 contribute to the pyridoxal 5'-phosphate site; these read DDAH and TASK. K567 carries the N6-(pyridoxal phosphate)lysine modification. A substrate-binding site is contributed by T684.

The protein in the N-terminal section; belongs to the BioW family. This sequence in the C-terminal section; belongs to the class-II pyridoxal-phosphate-dependent aminotransferase family. BioF subfamily. In terms of assembly, homodimer. Mg(2+) is required as a cofactor. Pyridoxal 5'-phosphate serves as cofactor.

The enzyme catalyses heptanedioate + ATP + CoA = 6-carboxyhexanoyl-CoA + AMP + diphosphate. It catalyses the reaction 6-carboxyhexanoyl-[ACP] + L-alanine + H(+) = (8S)-8-amino-7-oxononanoate + holo-[ACP] + CO2. It functions in the pathway metabolic intermediate metabolism; pimeloyl-CoA biosynthesis; pimeloyl-CoA from pimelate: step 1/1. The protein operates within cofactor biosynthesis; biotin biosynthesis. Its function is as follows. Catalyzes both the decarboxylative condensation of pimeloyl-[acyl-carrier protein] and L-alanine to produce 8-amino-7-oxononanoate (AON), [acyl-carrier protein], and carbon dioxide, and the transformation of pimelate into pimeloyl-CoA with concomitant hydrolysis of ATP to AMP. The protein is Biotin biosynthesis bifunctional protein BioWF (bioWF) of Corynebacterium kroppenstedtii (strain DSM 44385 / JCM 11950 / CIP 105744 / CCUG 35717).